Consider the following 320-residue polypeptide: Cytochrome f (320 aa).

The signal sequence occupies residues 1-35; sequence MQNRNTFSWVKEPINRSISVLIIIYVITQTSISNA. Residues Tyr36, Cys56, Cys59, and His60 each coordinate heme. The helical transmembrane segment at 286–306 threads the bilayer; sequence VQGLLFFLASVTLAQIFLVLK.

This sequence belongs to the cytochrome f family. The 4 large subunits of the cytochrome b6-f complex are cytochrome b6, subunit IV (17 kDa polypeptide, petD), cytochrome f and the Rieske protein, while the 4 small subunits are PetG, PetL, PetM and PetN. The complex functions as a dimer. Requires heme as cofactor.

The protein resides in the plastid. Its subcellular location is the chloroplast thylakoid membrane. Functionally, component of the cytochrome b6-f complex, which mediates electron transfer between photosystem II (PSII) and photosystem I (PSI), cyclic electron flow around PSI, and state transitions. This Piper cenocladum (Ant piper) protein is Cytochrome f.